A 411-amino-acid chain; its full sequence is MNALAATNRNFRQAARILGLDSKLEKSLLIPFREIKVECTIPKDDGTLVSYVGFRVQHDNARGPMKGGIRYHPEVDLDEVNALAQLMTWKTAVADIPYGGAKGGIGCKPKDLSKSELERLTRVFTQKIHDLIGINTDVPAPDMGTNAQTMAWILDEYSKFHGHSPAIVTGKPIDLGGSLGREAATGRGVVYATEALLAEYGKNIKDLTFAIQGFGNVGAWAAKLIHERGGKVIAVSDITGAVKNPNGLDIPALLNHKEATGKLIDFSGGDVMNSDEVLTHECDVLIPCALGGVLNRENADNVKAKFIIEAANHPTDPEADEILCKKGIVILPDIYANAGGVTVSYFEWVQNIQGFMWDEEKVNRELRKYMTKAFHNLKNMCQSHNCSLRMGAFTLGVNRVARATTLRGWEA.

Lys102 is a catalytic residue.

Belongs to the Glu/Leu/Phe/Val dehydrogenases family.

It catalyses the reaction L-glutamate + NAD(+) + H2O = 2-oxoglutarate + NH4(+) + NADH + H(+). It carries out the reaction L-glutamate + NADP(+) + H2O = 2-oxoglutarate + NH4(+) + NADPH + H(+). The protein is Glutamate dehydrogenase A (GDHA) of Nicotiana plumbaginifolia (Leadwort-leaved tobacco).